Here is a 693-residue protein sequence, read N- to C-terminus: Protein-glutamine gamma-glutamyltransferase E (693 aa).

Phosphotyrosine is present on Tyr-111. At Thr-112 the chain carries Phosphothreonine. Ca(2+) contacts are provided by Ala-222, Asn-225, Asn-227, and Asp-228. Residue Cys-273 is part of the active site. Positions 302, 304, 306, 308, and 325 each coordinate Ca(2+). Active-site residues include His-331 and Asp-354. Asn-394, Thr-416, Glu-444, and Glu-449 together coordinate Ca(2+). The tract at residues Lys-455–Ser-482 is disordered.

This sequence belongs to the transglutaminase superfamily. Transglutaminase family. As to quaternary structure, consists of two polypeptide chains, which are synthesized as a precursor form of a single polypeptide. Requires Ca(2+) as cofactor. Post-translationally, activated by proteolytic processing. In vitro activation is commonly achieved by cleavage with dispase, a neutral bacterial protease. Physiological activation may be catalyzed by CTSL and, to a lesser extent, by CTSS.

The protein localises to the cytoplasm. The enzyme catalyses L-glutaminyl-[protein] + L-lysyl-[protein] = [protein]-L-lysyl-N(6)-5-L-glutamyl-[protein] + NH4(+). Functionally, catalyzes the calcium-dependent formation of isopeptide cross-links between glutamine and lysine residues in various proteins, as well as the conjugation of polyamines to proteins. Involved in the formation of the cornified envelope (CE), a specialized component consisting of covalent cross-links of proteins beneath the plasma membrane of terminally differentiated keratinocytes. Catalyzes small proline-rich proteins and LOR cross-linking to form small interchain oligomers, which are further cross-linked by TGM1 onto the growing CE scaffold. In hair follicles, involved in cross-linking structural proteins to hardening the inner root sheath. The chain is Protein-glutamine gamma-glutamyltransferase E (Tgm3) from Rattus norvegicus (Rat).